The primary structure comprises 513 residues: Aspartic proteinase A2 (513 aa).

A signal peptide spans 1–24 (MGVYSRAVAFSVFVSFLLFFTAYS). Positions 25–71 (KRNDGTFRVGLKKLKLDPNNRLATRFGSKQEEALRSSLRSYNNNLGG) are cleaved as a propeptide — activation peptide. A Peptidase A1 domain is found at 89 to 510 (YYGEIAIGTP…DFGNEQVGFA (422 aa)). Residue Asp107 is part of the active site. 2 disulfide bridges follow: Cys120-Cys126 and Cys285-Cys289. The active site involves Asp294. Residues 319 to 424 (VVSQQCKTVV…NEICERMPSP (106 aa)) form the Saposin B-type domain. 4 disulfide bridges follow: Cys324–Cys418, Cys349–Cys390, Cys355–Cys387, and Cys432–Cys469. The N-linked (GlcNAc...) asparagine glycan is linked to Asn404.

It belongs to the peptidase A1 family. In terms of tissue distribution, expressed in seed pods and dry seeds.

It localises to the vacuole. In terms of biological role, involved in the breakdown of propeptides of storage proteins in protein-storage vacuoles. This Arabidopsis thaliana (Mouse-ear cress) protein is Aspartic proteinase A2 (APA2).